We begin with the raw amino-acid sequence, 509 residues long: Probable glycine dehydrogenase (decarboxylating) subunit 2 (509 aa).

Lys-278 carries the post-translational modification N6-(pyridoxal phosphate)lysine.

Belongs to the GcvP family. C-terminal subunit subfamily. In terms of assembly, the glycine cleavage system is composed of four proteins: P, T, L and H. In this organism, the P 'protein' is a heterodimer of two subunits. The cofactor is pyridoxal 5'-phosphate.

It catalyses the reaction N(6)-[(R)-lipoyl]-L-lysyl-[glycine-cleavage complex H protein] + glycine + H(+) = N(6)-[(R)-S(8)-aminomethyldihydrolipoyl]-L-lysyl-[glycine-cleavage complex H protein] + CO2. Functionally, the glycine cleavage system catalyzes the degradation of glycine. The P protein binds the alpha-amino group of glycine through its pyridoxal phosphate cofactor; CO(2) is released and the remaining methylamine moiety is then transferred to the lipoamide cofactor of the H protein. This is Probable glycine dehydrogenase (decarboxylating) subunit 2 from Saccharolobus islandicus (strain Y.N.15.51 / Yellowstone #2) (Sulfolobus islandicus).